We begin with the raw amino-acid sequence, 342 residues long: Dihydroorotate dehydrogenase (quinone) (342 aa).

FMN contacts are provided by residues 60–64 and Thr-84; that span reads AGLDK. Position 64 (Lys-64) interacts with substrate. Residue 109 to 113 participates in substrate binding; sequence NRMGF. The FMN site is built by Asn-137 and Asn-170. Residue Asn-170 participates in substrate binding. The active-site Nucleophile is Ser-173. Asn-175 serves as a coordination point for substrate. Residues Lys-215 and Thr-243 each coordinate FMN. 244–245 lines the substrate pocket; that stretch reads NT. FMN-binding positions include Gly-266, Gly-295, and 316 to 317; that span reads YS.

Belongs to the dihydroorotate dehydrogenase family. Type 2 subfamily. As to quaternary structure, monomer. FMN serves as cofactor.

The protein resides in the cell membrane. It catalyses the reaction (S)-dihydroorotate + a quinone = orotate + a quinol. Its pathway is pyrimidine metabolism; UMP biosynthesis via de novo pathway; orotate from (S)-dihydroorotate (quinone route): step 1/1. Its function is as follows. Catalyzes the conversion of dihydroorotate to orotate with quinone as electron acceptor. This chain is Dihydroorotate dehydrogenase (quinone), found in Nitrosomonas europaea (strain ATCC 19718 / CIP 103999 / KCTC 2705 / NBRC 14298).